We begin with the raw amino-acid sequence, 290 residues long: NAD kinase (290 aa).

Asp72 (proton acceptor) is an active-site residue. Residues 72 to 73 (DG), Lys77, 145 to 146 (NE), Asp175, 186 to 191 (TAYSLS), and Ala210 each bind NAD(+).

This sequence belongs to the NAD kinase family. The cofactor is a divalent metal cation.

The protein localises to the cytoplasm. It catalyses the reaction NAD(+) + ATP = ADP + NADP(+) + H(+). Involved in the regulation of the intracellular balance of NAD and NADP, and is a key enzyme in the biosynthesis of NADP. Catalyzes specifically the phosphorylation on 2'-hydroxyl of the adenosine moiety of NAD to yield NADP. The chain is NAD kinase from Bacteroides fragilis (strain ATCC 25285 / DSM 2151 / CCUG 4856 / JCM 11019 / LMG 10263 / NCTC 9343 / Onslow / VPI 2553 / EN-2).